Reading from the N-terminus, the 1198-residue chain is Phosphatidylinositol-3,5-bisphosphate 3-phosphatase MTMR3 (1198 aa).

Position 8 is a phosphoserine (Ser8). The region spanning 155 to 576 (EHVTSRFKNE…RNLMLWSAVY (422 aa)) is the Myotubularin phosphatase domain. The segment covering 265–280 (SRSSGSKLSTRNTSRD) has biased composition (polar residues). Residues 265–285 (SRSSGSKLSTRNTSRDFPNGG) are disordered. 3 residues coordinate a 1,2-diacyl-sn-glycero-3-phospho-(1D-myo-inositol-3,5-bisphosphate): Asn326, Asn351, and Ile352. The a 1,2-diacyl-sn-glycero-3-phospho-(1D-myo-inositol-3-phosphate) site is built by Asn326, Asn351, and Ile352. The active-site Phosphocysteine intermediate is the Cys413. 8 residues coordinate a 1,2-diacyl-sn-glycero-3-phospho-(1D-myo-inositol-3,5-bisphosphate): Ser414, Asp415, Gly416, Trp417, Asp418, Arg419, Lys455, and Arg459. The a 1,2-diacyl-sn-glycero-3-phospho-(1D-myo-inositol-3-phosphate) site is built by Ser414, Asp415, Gly416, Trp417, Asp418, and Arg419. Arg459 contacts a 1,2-diacyl-sn-glycero-3-phospho-(1D-myo-inositol-3-phosphate). The tract at residues 590 to 612 (CAPYPAPGTSPDDPPLSRLPKTR) is disordered. Positions 593–603 (YPAPGTSPDDP) are enriched in pro residues. Phosphoserine occurs at positions 613, 633, 647, and 651. 3 disordered regions span residues 650-669 (LSSL…LGKP), 716-735 (EGKE…PEAS), and 855-891 (KSVS…SLVE). A compositionally biased stretch (basic and acidic residues) spans 716-732 (EGKEDPLLEKESRRKTP). The residue at position 731 (Thr731) is a Phosphothreonine. Residues Ser906 and Ser909 each carry the phosphoserine modification. Disordered stretches follow at residues 933–974 (ETEN…SRQL) and 993–1019 (WLHS…DDDG). Over residues 999-1010 (GRPSATSSPDQP) the composition is skewed to polar residues. A coiled-coil region spans residues 1029–1062 (QRLRQIESGHQQEVETLKKQVQELKSRLESQYLT). A Phosphoserine modification is found at Ser1064. The segment at 1119-1179 (DHLAAHCYAC…VCKSCYSSLH (61 aa)) adopts an FYVE-type zinc-finger fold. Residues Cys1125, Cys1128, Cys1141, Cys1144, Cys1149, Cys1152, Cys1171, and Cys1174 each coordinate Zn(2+).

Belongs to the protein-tyrosine phosphatase family. Non-receptor class myotubularin subfamily. As to quaternary structure, forms heterodimers with MTMR4 that recruit both CEP55 and PLK1; occurs during early mitosis, regulates the phosphorylation of CEP55 by PLK1 and its recruitment to the midbody where it mediates cell abscission. Phosphorylated by CDK1 during mitosis.

It localises to the cytoplasm. It is found in the cytosol. Its subcellular location is the membrane. The catalysed reaction is a 1,2-diacyl-sn-glycero-3-phospho-(1D-myo-inositol-3,5-bisphosphate) + H2O = a 1,2-diacyl-sn-glycero-3-phospho-(1D-myo-inositol-5-phosphate) + phosphate. It catalyses the reaction a 1,2-diacyl-sn-glycero-3-phospho-(1D-myo-inositol-3-phosphate) + H2O = a 1,2-diacyl-sn-glycero-3-phospho-(1D-myo-inositol) + phosphate. It carries out the reaction 1,2-dihexadecanoyl-sn-glycero-3-phospho-(1D-myo-inositol-3-phosphate) + H2O = 1,2-dihexadecanoyl-sn-glycero-3-phospho-(1D-myo-inositol) + phosphate. The enzyme catalyses 1,2-dioctanoyl-sn-glycero-3-phospho-(1-D-myo-inositol-3-phosphate) + H2O = 1,2-dioctanoyl-sn-glycero-3-phospho-(1D-myo-inositol) + phosphate. The catalysed reaction is 1,2-dihexadecanoyl-sn-glycero-3-phospho-(1D-myo-inositol-3,5-phosphate) + H2O = 1,2-dihexadecanoyl-sn-glycero-3-phospho-(1D-myo-inositol-5-phosphate) + phosphate. Lipid phosphatase that specifically dephosphorylates the D-3 position of phosphatidylinositol 3-phosphate and phosphatidylinositol 3,5-bisphosphate, generating phosphatidylinositol and phosphatidylinositol 5-phosphate. Decreases the levels of phosphatidylinositol 3-phosphate, a phospholipid found in cell membranes where it acts as key regulator of both cell signaling and intracellular membrane traffic. Could also have a molecular sequestering/adapter activity and regulate biological processes independently of its phosphatase activity. It includes the regulation of midbody abscission during mitotic cytokinesis. The polypeptide is Phosphatidylinositol-3,5-bisphosphate 3-phosphatase MTMR3 (Homo sapiens (Human)).